A 741-amino-acid polypeptide reads, in one-letter code: Zinc metalloproteinase nas-30 (741 aa).

Composition is skewed to low complexity over residues 71–85 and 97–118; these read KPAP…APAP and PAPK…DAPP. Residues 71 to 122 form a disordered region; the sequence is KPAPAAAGPRSAPAPTNEDYNTDIDVPAPKAKARAAPTPRRAQADAPPVYRQ. One can recognise a Peptidase M12A domain in the interval 324–516; that stretch reads KVITGSVYRW…VKQVNRLYCN (193 aa). Intrachain disulfides connect C364/C515, C385/C404, C519/C539, C541/C550, C562/C583, and C610/C630. Residue H412 participates in Zn(2+) binding. Residue E413 is part of the active site. Zn(2+) contacts are provided by H416 and H422. The EGF-like domain maps to 539 to 550; sequence CKCPDGLGGKLC. In terms of domain architecture, CUB spans 550–648; sequence CGRAAKGTDH…ISDQSEALIL (99 aa). A glycan (N-linked (GlcNAc...) asparagine) is linked at N633.

It depends on Zn(2+) as a cofactor.

Its function is as follows. Metalloprotease. The protein is Zinc metalloproteinase nas-30 of Caenorhabditis elegans.